A 345-amino-acid polypeptide reads, in one-letter code: Phosphoribosylformylglycinamidine cyclo-ligase (345 aa).

It belongs to the AIR synthase family.

Its subcellular location is the cytoplasm. The catalysed reaction is 2-formamido-N(1)-(5-O-phospho-beta-D-ribosyl)acetamidine + ATP = 5-amino-1-(5-phospho-beta-D-ribosyl)imidazole + ADP + phosphate + H(+). It functions in the pathway purine metabolism; IMP biosynthesis via de novo pathway; 5-amino-1-(5-phospho-D-ribosyl)imidazole from N(2)-formyl-N(1)-(5-phospho-D-ribosyl)glycinamide: step 2/2. This chain is Phosphoribosylformylglycinamidine cyclo-ligase, found in Methanopyrus kandleri (strain AV19 / DSM 6324 / JCM 9639 / NBRC 100938).